The sequence spans 487 residues: Glutamyl-tRNA(Gln) amidotransferase subunit A (487 aa).

Catalysis depends on charge relay system residues K79 and S158. The active-site Acyl-ester intermediate is S182.

Belongs to the amidase family. GatA subfamily. In terms of assembly, heterotrimer of A, B and C subunits.

It catalyses the reaction L-glutamyl-tRNA(Gln) + L-glutamine + ATP + H2O = L-glutaminyl-tRNA(Gln) + L-glutamate + ADP + phosphate + H(+). Allows the formation of correctly charged Gln-tRNA(Gln) through the transamidation of misacylated Glu-tRNA(Gln) in organisms which lack glutaminyl-tRNA synthetase. The reaction takes place in the presence of glutamine and ATP through an activated gamma-phospho-Glu-tRNA(Gln). In Ehrlichia ruminantium (strain Gardel), this protein is Glutamyl-tRNA(Gln) amidotransferase subunit A.